Reading from the N-terminus, the 123-residue chain is Prostate stem cell antigen (123 aa).

A signal peptide spans 1–20; that stretch reads MKTVFFLLLATYLALHPGAA. The region spanning 21–95 is the UPAR/Ly6 domain; it reads LQCYSCTAQM…CCYSDLCNVN (75 aa). 5 disulfide bridges follow: cysteine 23/cysteine 48, cysteine 26/cysteine 35, cysteine 41/cysteine 66, cysteine 70/cysteine 86, and cysteine 87/cysteine 92. Asparagine 40 carries an N-linked (GlcNAc...) asparagine glycan. Residue asparagine 95 is the site of GPI-anchor amidated asparagine attachment. The propeptide at 96 to 123 is removed in mature form; that stretch reads GAHTLKPPTTLGLLTVLCSLLLWGSSRL.

As to quaternary structure, interacts with CHRNA4. Predominantly expressed in prostate. Also found in spleen, liver, lung, prostate, kidney and testis. Expressed in brain cortex; expression is increased in transgenic mouse model of Alzheimer disease (at protein level).

It is found in the cell membrane. Its function is as follows. May be involved in the regulation of cell proliferation. May act as a modulator of nicotinic acetylcholine receptors (nAChRs) activity. In vitro inhibits nicotine-induced signaling probably implicating alpha-3:beta-2- or alpha-7-containing nAChRs. This is Prostate stem cell antigen (Psca) from Mus musculus (Mouse).